The following is a 143-amino-acid chain: Small ribosomal subunit protein uS12 (143 aa).

Pro62 bears the Hydroxyproline mark.

It belongs to the universal ribosomal protein uS12 family. As to quaternary structure, component of the 40S small ribosomal subunit.

Its subcellular location is the cytoplasm. It is found in the cytosol. The protein resides in the rough endoplasmic reticulum. This is Small ribosomal subunit protein uS12 (rps-23) from Caenorhabditis elegans.